Consider the following 582-residue polypeptide: Putative transcriptional regulator HVO_1357 (582 aa).

One can recognise a Response regulatory domain in the interval Val-19 to Leu-129. Residue Asp-67 is modified to 4-aspartylphosphate. Residues Leu-165–Val-203 are a coiled coil. Positions Leu-517–Glu-569 constitute an HTH bat-type domain.

In terms of biological role, may be part of a signal-dependent gene regulation cascade that is relevant to swimming motility. May be involved in the transcription regulation of target genes. This chain is Putative transcriptional regulator HVO_1357, found in Haloferax volcanii (strain ATCC 29605 / DSM 3757 / JCM 8879 / NBRC 14742 / NCIMB 2012 / VKM B-1768 / DS2) (Halobacterium volcanii).